Consider the following 180-residue polypeptide: Der GTPase-activating protein YihI (180 aa).

2 disordered regions span residues 1–88 (MTRK…KERR) and 147–180 (PEVTEEAPVRKGAKTDEDLLDQFENMDLDSFGKE). 4 stretches are compositionally biased toward basic and acidic residues: residues 18–33 (FREKSTTQVDVEARKS), 50–67 (EALDPKHYANGQKKDPRL), 77–88 (VEKKPTTKKERR), and 153–163 (APVRKGAKTDE). Acidic residues predominate over residues 164 to 173 (DLLDQFENMD).

This sequence belongs to the YihI family. Interacts with Der.

Its function is as follows. A GTPase-activating protein (GAP) that modifies Der/EngA GTPase function. May play a role in ribosome biogenesis. This is Der GTPase-activating protein YihI from Photobacterium profundum (strain SS9).